A 316-amino-acid polypeptide reads, in one-letter code: tRNA methyltransferase 10 homolog B (316 aa).

The stretch at 73-97 (EKIVAAKKSKRKQEKERRKANRAEN) forms a coiled coil. The disordered stretch occupies residues 77 to 98 (AAKKSKRKQEKERRKANRAENP). An SAM-dependent MTase TRM10-type domain is found at 113–310 (TKDKLLEAKH…KGVSSGKGYI (198 aa)).

It belongs to the class IV-like SAM-binding methyltransferase superfamily. TRM10 family.

It catalyses the reaction guanosine(9) in tRNA + S-adenosyl-L-methionine = N(1)-methylguanosine(9) in tRNA + S-adenosyl-L-homocysteine + H(+). In terms of biological role, S-adenosyl-L-methionine-dependent guanine N(1)-methyltransferase that catalyzes the formation of N(1)-methylguanine at position 9 (m1G9) in tRNAs. Probably not able to catalyze formation of N(1)-methyladenine at position 9 (m1A9) in tRNAs. The sequence is that of tRNA methyltransferase 10 homolog B (TRMT10B) from Homo sapiens (Human).